The sequence spans 489 residues: UDP-N-acetylmuramate--L-alanine ligase (489 aa).

Residue Gly128–Thr134 participates in ATP binding.

It belongs to the MurCDEF family.

It localises to the cytoplasm. The enzyme catalyses UDP-N-acetyl-alpha-D-muramate + L-alanine + ATP = UDP-N-acetyl-alpha-D-muramoyl-L-alanine + ADP + phosphate + H(+). It functions in the pathway cell wall biogenesis; peptidoglycan biosynthesis. Its function is as follows. Cell wall formation. The sequence is that of UDP-N-acetylmuramate--L-alanine ligase from Shewanella sediminis (strain HAW-EB3).